The chain runs to 186 residues: Peptidyl-tRNA hydrolase (186 aa).

TRNA is bound at residue Tyr17. The active-site Proton acceptor is His22. Residues Tyr64 and Asn66 each contribute to the tRNA site.

Belongs to the PTH family. As to quaternary structure, monomer.

It localises to the cytoplasm. It carries out the reaction an N-acyl-L-alpha-aminoacyl-tRNA + H2O = an N-acyl-L-amino acid + a tRNA + H(+). Functionally, hydrolyzes ribosome-free peptidyl-tRNAs (with 1 or more amino acids incorporated), which drop off the ribosome during protein synthesis, or as a result of ribosome stalling. Catalyzes the release of premature peptidyl moieties from peptidyl-tRNA molecules trapped in stalled 50S ribosomal subunits, and thus maintains levels of free tRNAs and 50S ribosomes. The protein is Peptidyl-tRNA hydrolase of Methylacidiphilum infernorum (isolate V4) (Methylokorus infernorum (strain V4)).